Consider the following 878-residue polypeptide: Pyruvate dehydrogenase phosphatase regulatory subunit, mitochondrial (878 aa).

Residues 1-93 (MLYRLLSIVQ…CAGILSTARH (93 aa)) constitute a mitochondrion transit peptide.

It belongs to the GcvT family. Heterodimer of a catalytic (PDP1) and a regulatory (PDPR) subunit.

It is found in the mitochondrion matrix. Functionally, decreases the sensitivity of PDP1 to magnesium ions, and this inhibition is reversed by the polyamine spermine. The sequence is that of Pyruvate dehydrogenase phosphatase regulatory subunit, mitochondrial (Pdpr) from Mus musculus (Mouse).